A 342-amino-acid chain; its full sequence is Trace amine-associated receptor 8 (342 aa).

Over 1-31 the chain is Extracellular; sequence MTSNFSQPVVQLCYEDVNGSCIETPYSPGSR. N-linked (GlcNAc...) asparagine glycosylation is found at N4 and N18. Intrachain disulfides connect C21/C185 and C104/C189. The helical transmembrane segment at 32–52 threads the bilayer; sequence VILYTAFSFGSLLAVFGNLLV. At 53–67 the chain is on the cytoplasmic side; that stretch reads MTSVLHFKQLHSPTN. The helical transmembrane segment at 68–88 threads the bilayer; sequence FLIASLACADFLVGVTVMLFS. Residues 89–111 are Extracellular-facing; the sequence is MVRTVESCWYFGAKFCTLHSCCD. A helical transmembrane segment spans residues 112-132; the sequence is VAFCYSSVLHLCFICIDRYIV. The Cytoplasmic portion of the chain corresponds to 133-146; the sequence is VTDPLVYATKFTVS. The helical transmembrane segment at 147-167 threads the bilayer; sequence VSGICISVSWILPLTYSGAVF. Over 168 to 195 the chain is Extracellular; it reads YTGVNDDGLEELVSALNCVGGCQIIVSQ. A helical membrane pass occupies residues 196 to 216; sequence GWVLIDFLLFFIPTLVMIILY. Residues 217–258 lie on the Cytoplasmic side of the membrane; the sequence is SKIFLIAKQQAIKIETTSSKVESSSESYKIRVAKRERKAAKT. Residues 259-279 form a helical membrane-spanning segment; that stretch reads LGVTVLAFVISWLPYTVDILI. Position 280 (D280) is a topological domain, extracellular. A helical transmembrane segment spans residues 281-301; it reads AFMGFLTPAYIYEICCWSAYY. The Cytoplasmic portion of the chain corresponds to 302 to 342; sequence NSAMNPLIYALFYPWFRKAIKLILSGDVLKASSSTISLFLE.

The protein belongs to the G-protein coupled receptor 1 family. As to expression, expressed in kidney and amygdala. Not expressed in other tissues or brain regions tested.

The protein resides in the cell membrane. Functionally, olfactory receptor specific for trace amines. Trace amine compounds are enriched in animal body fluids and act on trace amine-associated receptors (TAARs) to elicit both intraspecific and interspecific innate behaviors. Ligand-binding causes a conformation change that triggers signaling via G alpha proteins, possibly G(i)/G(o) G alpha proteins. In Homo sapiens (Human), this protein is Trace amine-associated receptor 8 (TAAR8).